The primary structure comprises 691 residues: 1,4-alpha-glucan-branching enzyme (691 aa).

Positions 80 and 116 each coordinate (1,4-alpha-D-glucosyl)n. Aspartate 333 serves as the catalytic Nucleophile. Glutamate 398 (proton donor) is an active-site residue.

It belongs to the glycosyl hydrolase 13 family. GlgB subfamily.

The protein localises to the cytoplasm. It catalyses the reaction Transfers a segment of a (1-&gt;4)-alpha-D-glucan chain to a primary hydroxy group in a similar glucan chain.. It participates in glycan biosynthesis; glycogen biosynthesis. Functionally, glycogen-branching enzyme participates in the glycogen biosynthetic process along with glycogenin and glycogen synthase. Generates alpha-1,6-glucosidic branches from alpha-1,4-linked glucose chains, to increase solubility of the glycogen polymer. This chain is 1,4-alpha-glucan-branching enzyme (GLC3), found in Yarrowia lipolytica (strain CLIB 122 / E 150) (Yeast).